We begin with the raw amino-acid sequence, 127 residues long: Small ribosomal subunit protein uS11 (127 aa).

The protein belongs to the universal ribosomal protein uS11 family. Part of the 30S ribosomal subunit. Interacts with proteins S7 and S18. Binds to IF-3.

Located on the platform of the 30S subunit, it bridges several disparate RNA helices of the 16S rRNA. Forms part of the Shine-Dalgarno cleft in the 70S ribosome. This chain is Small ribosomal subunit protein uS11, found in Rickettsia canadensis (strain McKiel).